Here is a 113-residue protein sequence, read N- to C-terminus: Putative hemolysin E-like protein (113 aa).

It belongs to the hemolysin E family.

The polypeptide is Putative hemolysin E-like protein (Shigella flexneri).